Reading from the N-terminus, the 1476-residue chain is SH3 and multiple ankyrin repeat domains protein 2 (1476 aa).

Polar residues predominate over residues 66 to 76 (LSPQLLQQTPS). The segment at 66–134 (LSPQLLQQTP…GANKDSLSTF (69 aa)) is disordered. The SH3 domain occupies 147-206 (VPGRLFVAVKPYQPQVDGEIPLHRGDRVKVLSIGEGGFWEGSARGHIGWFPAECVEEVQC). Val162 bears the Phosphoserine mark. Residues 247–341 (TVVLQKKDNE…HLILKVVTVT (95 aa)) form the PDZ domain. The residue at position 372 (Ser372) is a Phosphoserine. The tract at residues 391-412 (RKKKDKPEEIVPASKPSRTAEN) is disordered. The residue at position 456 (Ser456) is a Phosphoserine. Thr485 carries the post-translational modification Phosphothreonine. Positions 503-533 (LSMPDTSEDIPPPPQSVPPSPPPPSPTTYNC) are disordered. Residues 512–528 (IPPPPQSVPPSPPPPSP) are compositionally biased toward pro residues. Ser586 bears the Phosphoserine mark. Disordered stretches follow at residues 659–916 (TIIV…KDRR), 946–983 (VPMA…TEGA), and 1057–1153 (PALA…ESMD). Residues 666-678 (STSSSGKSSQGSS) are compositionally biased toward low complexity. Positions 711–722 (VRDREKRLEARR) are enriched in basic and acidic residues. Ser724 bears the Phosphoserine mark. Gly residues predominate over residues 783–795 (LGGGEAGAQGEAG). Low complexity predominate over residues 833–846 (RLLDPSSPLALALS). 2 stretches are compositionally biased toward basic and acidic residues: residues 847–868 (ARDR…KADL) and 899–916 (RRQE…KDRR). Thr903 bears the Phosphothreonine mark. A compositionally biased stretch (polar residues) spans 1070–1085 (TSQPPTLNSSQPANST). Over residues 1119-1130 (VDSRSSSDHHLE) the composition is skewed to basic and acidic residues. Low complexity predominate over residues 1131–1151 (TTSTISTVSSISTLSSEGGES). The short motif at 1169–1175 (PPVPPKP) is the SH3-binding element. Disordered regions lie at residues 1195-1216 (EDTD…SAQA) and 1260-1403 (NRGK…ISNK). Pro residues predominate over residues 1202–1212 (IPPPAPPPPPG). Low complexity predominate over residues 1291–1305 (STVSGTRSTTVTFTV). O-linked (GlcNAc) threonine glycosylation is present at Thr1292. Residues 1307–1317 (PGTSQPITLQS) are compositionally biased toward polar residues. Phosphoserine occurs at positions 1334 and 1338. A compositionally biased stretch (polar residues) spans 1364-1375 (LSDVFSLPSQSP). A compositionally biased stretch (low complexity) spans 1387–1401 (RSRSPSPSILQQPIS). The SAM domain maps to 1413–1476 (WTKPDVADWL…ERALKQLLDR (64 aa)).

Belongs to the SHANK family. Is part of a complex with DLG4/PSD-95 and DLGAP1/GKAP. Interacts with CTTN/cortactin SH3 domain, DLGAP1/GKAP and alpha-latrotoxin receptor 1. Interacts with DNM2, DBNL, GRID2, BAIAP2, SLC9A3, PLCB3 and CFTR. Interacts (via proline-rich region) with PDE4D. Interacts with ABI1 (via SH3 domain). Detected in brain (at protein level), where it is highly expressed in Purkinje cells.

The protein localises to the apical cell membrane. It localises to the cytoplasm. It is found in the synapse. The protein resides in the postsynaptic density. Its subcellular location is the cell projection. The protein localises to the dendritic spine. It localises to the growth cone. Seems to be an adapter protein in the postsynaptic density (PSD) of excitatory synapses that interconnects receptors of the postsynaptic membrane including NMDA-type and metabotropic glutamate receptors, and the actin-based cytoskeleton. May play a role in the structural and functional organization of the dendritic spine and synaptic junction. This chain is SH3 and multiple ankyrin repeat domains protein 2 (Shank2), found in Mus musculus (Mouse).